Here is a 178-residue protein sequence, read N- to C-terminus: MQSADNLIWIDLEMTGLDVDSCKIIEIAAIITDKDLNIIAEAEPIAIYQPDEVLANMNEWCIKTHTETGLTQRVKDSKISTEAAEQQILEFIRKFVPYQSSPLCGNSIWQDRRFLAKYMPNIDEYCHYRMLDVTTLKLLNQYWGDGKSFEKKNTHKALDDIRESIAELKFYRQELLSI.

The 162-residue stretch at 7–168 folds into the Exonuclease domain; the sequence is LIWIDLEMTG…DDIRESIAEL (162 aa). Y128 is an active-site residue.

Belongs to the oligoribonuclease family.

The protein resides in the cytoplasm. Its function is as follows. 3'-to-5' exoribonuclease specific for small oligoribonucleotides. The polypeptide is Oligoribonuclease (Francisella tularensis subsp. holarctica (strain OSU18)).